The chain runs to 480 residues: Adenosylhomocysteinase (480 aa).

3 residues coordinate substrate: T63, D142, and E203. Residue 204–206 (TTT) coordinates NAD(+). Substrate is bound by residues K233 and D237. NAD(+) is bound by residues N238, 267–272 (GYGDVG), E290, N325, 346–348 (IGH), and N394.

It belongs to the adenosylhomocysteinase family. It depends on NAD(+) as a cofactor.

It localises to the cytoplasm. It carries out the reaction S-adenosyl-L-homocysteine + H2O = L-homocysteine + adenosine. It functions in the pathway amino-acid biosynthesis; L-homocysteine biosynthesis; L-homocysteine from S-adenosyl-L-homocysteine: step 1/1. Functionally, may play a key role in the regulation of the intracellular concentration of adenosylhomocysteine. The polypeptide is Adenosylhomocysteinase (Xanthomonas euvesicatoria pv. vesicatoria (strain 85-10) (Xanthomonas campestris pv. vesicatoria)).